The chain runs to 1144 residues: Formin-like protein 18 (1144 aa).

One can recognise a Phosphatase tensin-type domain in the interval 17-193 (LEISERVYVF…QYISRRNVGS (177 aa)). Cys-126 acts as the Phosphocysteine intermediate in catalysis. The C2 tensin-type domain maps to 199–338 (DQALTLDCVN…FSAEVIFSEM (140 aa)). Disordered regions lie at residues 429-463 (ISEN…SILK) and 482-729 (KIFS…KGRG). Residues 441 to 450 (SPEKEKDTMS) show a composition bias toward basic and acidic residues. Positions 491–522 (SPVTSPLPNRSPTQGSPASISRFHSSPSSLGI) are enriched in polar residues. The segment covering 526-536 (LHDHGSCKDEE) has biased composition (basic and acidic residues). The segment covering 538–548 (TSSSPASPSIS) has biased composition (low complexity). Residues 555-580 (PLTSSQPKKASPQCPQSPTPVHSNGP) are compositionally biased toward polar residues. Positions 603-613 (RPPPPPPPPPI) are enriched in pro residues. Positions 614-629 (SSLRSTPSPSSTSNSI) are enriched in low complexity. Residues 633–643 (GPPPPPPPPPL) show a composition bias toward pro residues. A compositionally biased stretch (low complexity) spans 644–653 (QSHRSALSSS). Positions 669–678 (NPPPPPPPPL) are enriched in pro residues. Positions 679 to 695 (HSNSRMGAPTSSLVLKS) are enriched in low complexity. Pro residues predominate over residues 696–705 (PPVPPPPAPA). One can recognise an FH2 domain in the interval 735–1135 (KGQGQTRKAN…RAQKEAENEK (401 aa)).

The protein belongs to the formin-like family. Class-II subfamily.

The protein is Formin-like protein 18 (FH18) of Arabidopsis thaliana (Mouse-ear cress).